The sequence spans 369 residues: Superinfection exclusion protein (369 aa).

The N-terminal stretch at 1–15 is a signal peptide; it reads MIALLILSLTCSVST.

Belongs to the serpin family. Orthopoxvirus OPG040 subfamily. Interacts with A56 protein.

It is found in the virion membrane. Its subcellular location is the host cell membrane. Functionally, prevents cell to cell fusion via its interaction with A56 protein. The A56-K2 complex associates with components of the entry fusion complex (EFC) presumably to avoid superinfection and syncytium formation. The protein is Superinfection exclusion protein (OPG040) of Vaccinia virus (strain Copenhagen) (VACV).